The following is a 499-amino-acid chain: Thioredoxin reductase 1, cytoplasmic (499 aa).

FAD-binding positions include Ile18–Gly23, Asp42–Phe43, Thr58–Cys59, and Gly63–Lys67. Cys59 and Cys64 are disulfide-bonded. N6-succinyllysine is present on Lys68. A Phosphotyrosine modification is found at Tyr131. FAD contacts are provided by residues Tyr131–Gly132 and Thr161. NADP(+) contacts are provided by residues Arg166, Ala198–Glu204, Arg221–Ser222, Arg226, Arg226–Phe228, Val291–Arg293, and Lys315. Tyr200 contacts FAD. Residues Asp334, Glu341–Thr343, and His472 each bind FAD. Glu341 lines the NADP(+) pocket. Residue His472 is the Proton acceptor of the active site. Positions Cys497–Sec498 form a cross-link, cysteinyl-selenocysteine (Cys-Sec). Sec498 is a non-standard amino acid (selenocysteine).

The protein belongs to the class-I pyridine nucleotide-disulfide oxidoreductase family. As to quaternary structure, homodimer. FAD is required as a cofactor. Post-translationally, ISGylated.

It is found in the cytoplasm. It carries out the reaction [thioredoxin]-dithiol + NADP(+) = [thioredoxin]-disulfide + NADPH + H(+). The enzyme catalyses H2O2 + NADPH + H(+) = NADP(+) + 2 H2O. Its function is as follows. Reduces disulfideprotein thioredoxin (Trx) to its dithiol-containing form. Homodimeric flavoprotein involved in the regulation of cellular redox reactions, growth and differentiation. Contains a selenocysteine residue at the C-terminal active site that is essential for catalysis. Also has reductase activity on hydrogen peroxide (H2O2). This is Thioredoxin reductase 1, cytoplasmic from Rattus norvegicus (Rat).